Here is a 109-residue protein sequence, read N- to C-terminus: Polyprenyl transferase subC (109 aa).

The next 2 membrane-spanning stretches (helical) occupy residues 39–59 (LFCV…NDWI) and 84–104 (QAFV…HVML).

It belongs to the UbiA prenyltransferase family. Requires Mg(2+) as cofactor.

It localises to the membrane. Its pathway is secondary metabolite biosynthesis; terpenoid biosynthesis. In terms of biological role, polyprenyl transferase; part of the gene cluster that mediates the biosynthesis of the immunosuppressants subglutinols, meroterpenoids consisting of an alpha-pyrone (4-hydroxy-5,6-dimethyl-2-pyrone) moiety attached to a decalin core fused to a five-membered cyclic ether carrying a prenylside chain. The first step of the pathway is the synthesis of the alpha-pyrone moiety by the polyketide synthase subA via condensation of one acetyl-CoA starter unit with 3 malonyl-CoA units and 2 methylations. The alpha-pyrone is then combined with geranylgeranyl pyrophosphate (GGPP) formed by the GGPP synthase subD through the action of the prenyltransferase subC to yield a linear alpha-pyrone diterpenoid. Subsequent steps in the subglutinol biosynthetic pathway involve the decalin core formation, which is thought to be initiated by the epoxidation of the C10-C11 olefin by the FAD-dependent oxidoreductase subE. The following cyclization cascade would be catalyzed by the terpene cyclase subB. Lastly, the FAD-dependent dehydrogenase subF probably catalyzes the five-membered cyclic ether formation to complete the formation of subglutinol A. Subsequent redox reactions appear to give rise to subglutinol C and D, however, it remains unclear which enzymes are responsible for these transformations. SubD may have secondary function in the conversion of the identified subglutinols to subglutinol analog 45, which seems to be the major product of the cluster. The chain is Polyprenyl transferase subC from Metarhizium robertsii (strain ARSEF 23 / ATCC MYA-3075) (Metarhizium anisopliae (strain ARSEF 23)).